We begin with the raw amino-acid sequence, 218 residues long: Large ribosomal subunit protein uL3 (218 aa).

A disordered region spans residues 126–163; it reads HGFSRGPMTHGSKNHRQPGSIGAGTTPGRIYPGKRMSG.

This sequence belongs to the universal ribosomal protein uL3 family. Part of the 50S ribosomal subunit. Forms a cluster with proteins L14 and L19.

In terms of biological role, one of the primary rRNA binding proteins, it binds directly near the 3'-end of the 23S rRNA, where it nucleates assembly of the 50S subunit. The polypeptide is Large ribosomal subunit protein uL3 (Synechococcus sp. (strain CC9311)).